Consider the following 635-residue polypeptide: DNA mismatch repair protein MutL (635 aa).

It belongs to the DNA mismatch repair MutL/HexB family.

Its function is as follows. This protein is involved in the repair of mismatches in DNA. It is required for dam-dependent methyl-directed DNA mismatch repair. May act as a 'molecular matchmaker', a protein that promotes the formation of a stable complex between two or more DNA-binding proteins in an ATP-dependent manner without itself being part of a final effector complex. The polypeptide is DNA mismatch repair protein MutL (Yersinia pestis bv. Antiqua (strain Angola)).